The sequence spans 306 residues: Aspartate carbamoyltransferase catalytic subunit (306 aa).

Residues R55 and T56 each contribute to the carbamoyl phosphate site. K85 contacts L-aspartate. Residues R106, H133, and Q136 each contribute to the carbamoyl phosphate site. The L-aspartate site is built by R166 and R228. The carbamoyl phosphate site is built by L264 and P265.

It belongs to the aspartate/ornithine carbamoyltransferase superfamily. ATCase family. In terms of assembly, heterododecamer (2C3:3R2) of six catalytic PyrB chains organized as two trimers (C3), and six regulatory PyrI chains organized as three dimers (R2).

The catalysed reaction is carbamoyl phosphate + L-aspartate = N-carbamoyl-L-aspartate + phosphate + H(+). It participates in pyrimidine metabolism; UMP biosynthesis via de novo pathway; (S)-dihydroorotate from bicarbonate: step 2/3. Its function is as follows. Catalyzes the condensation of carbamoyl phosphate and aspartate to form carbamoyl aspartate and inorganic phosphate, the committed step in the de novo pyrimidine nucleotide biosynthesis pathway. The protein is Aspartate carbamoyltransferase catalytic subunit of Serratia marcescens.